A 78-amino-acid polypeptide reads, in one-letter code: Large ribosomal subunit protein bL28 (78 aa).

This sequence belongs to the bacterial ribosomal protein bL28 family.

This chain is Large ribosomal subunit protein bL28, found in Prochlorococcus marinus (strain MIT 9303).